The primary structure comprises 160 residues: Large ribosomal subunit protein eL21A (160 aa).

Residues 114-138 (AKRKEAKAQGKTVQLRRQPAPPAKA) are disordered.

The protein belongs to the eukaryotic ribosomal protein eL21 family. Component of the large ribosomal subunit (LSU). Mature yeast ribosomes consist of a small (40S) and a large (60S) subunit. The 40S small subunit contains 1 molecule of ribosomal RNA (18S rRNA) and at least 33 different proteins. The large 60S subunit contains 3 rRNA molecules (25S, 5.8S and 5S rRNA) and at least 46 different proteins.

The protein localises to the cytoplasm. Functionally, component of the ribosome, a large ribonucleoprotein complex responsible for the synthesis of proteins in the cell. The small ribosomal subunit (SSU) binds messenger RNAs (mRNAs) and translates the encoded message by selecting cognate aminoacyl-transfer RNA (tRNA) molecules. The large subunit (LSU) contains the ribosomal catalytic site termed the peptidyl transferase center (PTC), which catalyzes the formation of peptide bonds, thereby polymerizing the amino acids delivered by tRNAs into a polypeptide chain. The nascent polypeptides leave the ribosome through a tunnel in the LSU and interact with protein factors that function in enzymatic processing, targeting, and the membrane insertion of nascent chains at the exit of the ribosomal tunnel. The polypeptide is Large ribosomal subunit protein eL21A (rpl2101) (Schizosaccharomyces pombe (strain 972 / ATCC 24843) (Fission yeast)).